Here is a 188-residue protein sequence, read N- to C-terminus: Threonylcarbamoyl-AMP synthase (188 aa).

One can recognise a YrdC-like domain in the interval 3-188; it reads QLHPSEIKDL…RSGKILRNGQ (186 aa).

This sequence belongs to the SUA5 family. TsaC subfamily.

The protein localises to the cytoplasm. The catalysed reaction is L-threonine + hydrogencarbonate + ATP = L-threonylcarbamoyladenylate + diphosphate + H2O. In terms of biological role, required for the formation of a threonylcarbamoyl group on adenosine at position 37 (t(6)A37) in tRNAs that read codons beginning with adenine. Catalyzes the conversion of L-threonine, HCO(3)(-)/CO(2) and ATP to give threonylcarbamoyl-AMP (TC-AMP) as the acyladenylate intermediate, with the release of diphosphate. In Shewanella sp. (strain ANA-3), this protein is Threonylcarbamoyl-AMP synthase.